We begin with the raw amino-acid sequence, 504 residues long: Maturase K (504 aa).

The protein belongs to the intron maturase 2 family. MatK subfamily.

It localises to the plastid. The protein localises to the chloroplast. Usually encoded in the trnK tRNA gene intron. Probably assists in splicing its own and other chloroplast group II introns. The chain is Maturase K from Mentzelia laevicaulis (Blazing star).